Here is a 563-residue protein sequence, read N- to C-terminus: Probable tRNA (uracil-O(2)-)-methyltransferase (563 aa).

A C3H1-type zinc finger spans residues 536-563 (TIRKAPCWMSLHHPDGCPVGQEACRYEH).

The protein belongs to the TRM44 family.

It localises to the cytoplasm. The catalysed reaction is uridine(44) in tRNA(Ser) + S-adenosyl-L-methionine = 2'-O-methyluridine(44) in tRNA(Ser) + S-adenosyl-L-homocysteine + H(+). Functionally, probable adenosyl-L-methionine (AdoMet)-dependent tRNA (uracil-O(2)-)-methyltransferase. The sequence is that of Probable tRNA (uracil-O(2)-)-methyltransferase from Caenorhabditis elegans.